The following is a 269-amino-acid chain: Acyl-CoA-binding domain-containing protein 4 (269 aa).

The 90-residue stretch at 12–101 folds into the ACB domain; sequence CQKQFQAAVS…MKLVAQKVID (90 aa). Residues 23–32, 43–47, lysine 69, and tyrosine 88 contribute to the an acyl-CoA site; these read IQNLPKNGSY and YSYYK. Disordered regions lie at residues 150 to 175, 195 to 226, and 248 to 269; these read GAVSEPPCLPKEPAPPSPESHSPRDL, EQRAASGEKRDPRNSPVPPTEKEAAAQAQCSA, and VALPNVSDPKEVTVSGGVSAAN. A compositionally biased stretch (pro residues) spans 156–167; that stretch reads PCLPKEPAPPSP. Serine 166 and serine 171 each carry phosphoserine.

Functionally, binds medium- and long-chain acyl-CoA esters and may function as an intracellular carrier of acyl-CoA esters. The polypeptide is Acyl-CoA-binding domain-containing protein 4 (ACBD4) (Pongo abelii (Sumatran orangutan)).